The primary structure comprises 565 residues: MARPKNVKHIFVTGGVVSSLGKGILSASLGLLLKSRGLRVAIQKYDPYINVDPGTMSPYQHGEVYVTDDGAETDLDLGHYERFLDEPTSQASNLTMGRVYKAVIDKERQGEYLGGTVQVVPHVIDEIKAKMNELAKNANLDVLITEIGGTIGDIESLPFLEAMRQLKLDLGTKNLLNIHLTLVPYIKAACEMKTKPTQHSVKMLLETGIQPDILVCRSEKPLSREIKNKVGHFCNLHEADVIGLSDCETIYGVPIMLLDEQLDKRVLKKLGIKKFQDPELSYWTEFCDKVKHPEDGEVTIAVCGKYTEYPDAYKSILESFVHAGAVNNVKVTVRFIRSEDAEESGCDIATAMKDVHGLLVAPGFGDRGIEGKISFIRYARENNIPFLGICLGMQCATIEFARNVCGLSEANSTEFSKRCRQPVIDLMEHQKKVKEKGGTMRLGSYPCILKEDTIANKAYGKFLINERHRHRYEFNNEYRELLEQNGMLFSGTSPNGDLVEIIEISGHPWFVGVQFHPEYKSRVRSAHPLFVGFVAAAKAFAFGDRQLSFEPDTLPLGEPERTLEG.

The amidoligase domain stretch occupies residues 1 to 272; sequence MARPKNVKHI…DKRVLKKLGI (272 aa). Ser18 contributes to the CTP binding site. A UTP-binding site is contributed by Ser18. 19 to 24 contributes to the ATP binding site; the sequence is SLGKGI. Tyr59 serves as a coordination point for L-glutamine. Residue Asp76 participates in ATP binding. Mg(2+) contacts are provided by Asp76 and Glu146. CTP is bound by residues 153 to 155, 193 to 198, and Lys229; these read DIE and KTKPTQ. UTP is bound by residues 193–198 and Lys229; that span reads KTKPTQ. In terms of domain architecture, Glutamine amidotransferase type-1 spans 299–543; it reads TIAVCGKYTE…VAAAKAFAFG (245 aa). Gly363 is a binding site for L-glutamine. Catalysis depends on Cys390, which acts as the Nucleophile; for glutamine hydrolysis. L-glutamine-binding positions include 391-394, Glu414, and Arg471; that span reads LGMQ. Residues His516 and Glu518 contribute to the active site.

This sequence belongs to the CTP synthase family. In terms of assembly, homotetramer.

The catalysed reaction is UTP + L-glutamine + ATP + H2O = CTP + L-glutamate + ADP + phosphate + 2 H(+). The enzyme catalyses L-glutamine + H2O = L-glutamate + NH4(+). It carries out the reaction UTP + NH4(+) + ATP = CTP + ADP + phosphate + 2 H(+). It functions in the pathway pyrimidine metabolism; CTP biosynthesis via de novo pathway; CTP from UDP: step 2/2. Allosterically activated by GTP, when glutamine is the substrate; GTP has no effect on the reaction when ammonia is the substrate. The allosteric effector GTP functions by stabilizing the protein conformation that binds the tetrahedral intermediate(s) formed during glutamine hydrolysis. Inhibited by the product CTP, via allosteric rather than competitive inhibition. Functionally, catalyzes the ATP-dependent amination of UTP to CTP with either L-glutamine or ammonia as the source of nitrogen. Regulates intracellular CTP levels through interactions with the four ribonucleotide triphosphates. This chain is CTP synthase, found in Chlorobium phaeobacteroides (strain BS1).